The following is a 212-amino-acid chain: Probable NADH dehydrogenase [ubiquinone] iron-sulfur protein 8, mitochondrial (212 aa).

4Fe-4S ferredoxin-type domains follow at residues 104–133 (RRYP…IEAE) and 143–172 (TRYD…EGPN). [4Fe-4S] cluster contacts are provided by Cys-113, Cys-116, Cys-119, Cys-123, Cys-152, Cys-155, Cys-158, and Cys-162.

It belongs to the complex I 23 kDa subunit family. Complex I is composed of 45 different subunits This is a component of the iron-sulfur (IP) fragment of the enzyme. It depends on [4Fe-4S] cluster as a cofactor.

It localises to the mitochondrion. The enzyme catalyses a ubiquinone + NADH + 5 H(+)(in) = a ubiquinol + NAD(+) + 4 H(+)(out). Core subunit of the mitochondrial membrane respiratory chain NADH dehydrogenase (Complex I) that is believed to belong to the minimal assembly required for catalysis. Complex I functions in the transfer of electrons from NADH to the respiratory chain. The immediate electron acceptor for the enzyme is believed to be ubiquinone. This Caenorhabditis elegans protein is Probable NADH dehydrogenase [ubiquinone] iron-sulfur protein 8, mitochondrial.